The sequence spans 327 residues: GMP reductase (327 aa).

Catalysis depends on C175, which acts as the Thioimidate intermediate. 204-227 (IIADGGIRTHGDVAKSIRFGATMV) serves as a coordination point for NADP(+).

Belongs to the IMPDH/GMPR family. GuaC type 2 subfamily.

It carries out the reaction IMP + NH4(+) + NADP(+) = GMP + NADPH + 2 H(+). Its function is as follows. Catalyzes the irreversible NADPH-dependent deamination of GMP to IMP. It functions in the conversion of nucleobase, nucleoside and nucleotide derivatives of G to A nucleotides, and in maintaining the intracellular balance of A and G nucleotides. This chain is GMP reductase, found in Bacillus thuringiensis subsp. konkukian (strain 97-27).